The following is a 115-amino-acid chain: T-cell receptor gamma chain V region V108B (115 aa).

The N-terminal stretch at 1-18 (MLLLRWPTFCCLWVFGLG) is a signal peptide. Residues 19–115 (QLEQTELSVT…EATYYCAVWI (97 aa)) form a v segment region.

The sequence is that of T-cell receptor gamma chain V region V108B (Tcrg-V1) from Mus musculus (Mouse).